A 306-amino-acid chain; its full sequence is L-lactate dehydrogenase (306 aa).

NAD(+)-binding positions include Val-11, Asp-32, Lys-37, and 76 to 77; that span reads GA. Substrate-binding residues include Gln-79 and Arg-85. Residues Ser-98, 115-117, and Ser-140 each bind NAD(+); that span reads VSN. Position 117-120 (117-120) interacts with substrate; that stretch reads NPVD. A substrate-binding site is contributed by 145–148; that stretch reads DTAR. Beta-D-fructose 1,6-bisphosphate-binding residues include Arg-150 and His-165. The active-site Proton acceptor is His-172. Tyr-214 is subject to Phosphotyrosine. Thr-223 contacts substrate.

The protein belongs to the LDH/MDH superfamily. LDH family. As to quaternary structure, homotetramer.

The protein resides in the cytoplasm. It carries out the reaction (S)-lactate + NAD(+) = pyruvate + NADH + H(+). Its pathway is fermentation; pyruvate fermentation to lactate; (S)-lactate from pyruvate: step 1/1. Allosterically activated by fructose 1,6-bisphosphate (FBP). Functionally, catalyzes the conversion of lactate to pyruvate. This chain is L-lactate dehydrogenase, found in Synechococcus sp. (strain JA-3-3Ab) (Cyanobacteria bacterium Yellowstone A-Prime).